The following is a 208-amino-acid chain: MTGRRARIGVMGGTFDPIHHGHLVAASEVASQFQLEEVIFVPTGQPWQKAERDIAPAEDRYLMTVIATASNPRFTVSRVDIDRPGPTYTIDTLRDLRAELAARGLTDPDLFFITGADALAKIMSWNRAEELLTMAHFVGVTRPGHRLDTPTGLPPDRVSLLEIPALAISSTECRERIRQNRPIWYLVPDGIVQYISKRGLYRRTDGGR.

The protein belongs to the NadD family.

It catalyses the reaction nicotinate beta-D-ribonucleotide + ATP + H(+) = deamido-NAD(+) + diphosphate. Its pathway is cofactor biosynthesis; NAD(+) biosynthesis; deamido-NAD(+) from nicotinate D-ribonucleotide: step 1/1. Functionally, catalyzes the reversible adenylation of nicotinate mononucleotide (NaMN) to nicotinic acid adenine dinucleotide (NaAD). This Acidothermus cellulolyticus (strain ATCC 43068 / DSM 8971 / 11B) protein is Probable nicotinate-nucleotide adenylyltransferase.